We begin with the raw amino-acid sequence, 88 residues long: Sec-independent protein translocase protein TatA (88 aa).

Residues 1 to 21 (MGGISIWQLLIIALIVVLLFG) form a helical membrane-spanning segment. The segment at 43–88 (MSSEEDKKALEDAEAAKPVQTAQTVQSAQPTQQATEKKPESNKEQA) is disordered. Basic and acidic residues predominate over residues 46–57 (EEDKKALEDAEA). Polar residues predominate over residues 62 to 76 (QTAQTVQSAQPTQQA). The segment covering 77–88 (TEKKPESNKEQA) has biased composition (basic and acidic residues).

It belongs to the TatA/E family. In terms of assembly, the Tat system comprises two distinct complexes: a TatABC complex, containing multiple copies of TatA, TatB and TatC subunits, and a separate TatA complex, containing only TatA subunits. Substrates initially bind to the TatABC complex, which probably triggers association of the separate TatA complex to form the active translocon.

It localises to the cell inner membrane. In terms of biological role, part of the twin-arginine translocation (Tat) system that transports large folded proteins containing a characteristic twin-arginine motif in their signal peptide across membranes. TatA could form the protein-conducting channel of the Tat system. This Shewanella oneidensis (strain ATCC 700550 / JCM 31522 / CIP 106686 / LMG 19005 / NCIMB 14063 / MR-1) protein is Sec-independent protein translocase protein TatA.